An 843-amino-acid polypeptide reads, in one-letter code: Taste receptor type 1 member 2 (843 aa).

A signal peptide spans 1–19 (MGPQARTLHLLFLLLHALP). At 20–570 (KPVMLVGNSD…AFLEWHEVPT (551 aa)) the chain is on the extracellular side. 9 N-linked (GlcNAc...) asparagine glycosylation sites follow: Asn-87, Asn-296, Asn-316, Asn-355, Asn-372, Asn-432, Asn-484, Asn-491, and Asn-531. The helical transmembrane segment at 571–591 (IVVTILAALGFISTLAILLIF) threads the bilayer. Topologically, residues 592–606 (WRHFQTPMVRSAGGP) are cytoplasmic. A helical membrane pass occupies residues 607–627 (MCFLMLVPLLLAFGMVPVYVG). Topologically, residues 628–642 (PPTVFSCFCRQAFFT) are extracellular. Residues 643 to 663 (VCFSVCLSCITVRSFQIVCVF) traverse the membrane as a helical segment. Residues 664-682 (KMARRLPSAYGFWMRYHGP) are Cytoplasmic-facing. A helical transmembrane segment spans residues 683-703 (YVFVAFITAVKVALVAGNMLA). At 704 to 731 (TTINPIGRTDPDDPNIIILSCHPNYRNG) the chain is on the extracellular side. Residues 732-752 (LLFNTSMDLLLSVLGFSFAYV) form a helical membrane-spanning segment. The Cytoplasmic segment spans residues 753-764 (GKELPTNYNEAK). A helical membrane pass occupies residues 765 to 785 (FITLSMTFSFTSSISLCTFMS). The Extracellular segment spans residues 786–789 (VHDG). A helical transmembrane segment spans residues 790-810 (VLVTIMDLLVTVLNFLAIGLG). The Cytoplasmic portion of the chain corresponds to 811-843 (YFGPKCYMILFYPERNTSAYFNSMIQGYTMRKS).

It belongs to the G-protein coupled receptor 3 family. TAS1R subfamily. Forms heterodimers with TAS1R3. In terms of tissue distribution, expressed mainly in circumvallate and foliate taste papillae.

The protein resides in the cell membrane. In terms of biological role, putative taste receptor. TAS1R2/TAS1R3 recognizes diverse natural and synthetic sweeteners. This chain is Taste receptor type 1 member 2 (Tas1r2), found in Mus musculus (Mouse).